Here is a 416-residue protein sequence, read N- to C-terminus: D-amino acid dehydrogenase 2 (416 aa).

5–19 serves as a coordination point for FAD; it reads VCIIGAGVVGLATAY.

The protein belongs to the DadA oxidoreductase family. The cofactor is FAD.

The enzyme catalyses a D-alpha-amino acid + A + H2O = a 2-oxocarboxylate + AH2 + NH4(+). In terms of biological role, oxidative deamination of D-amino acids. The sequence is that of D-amino acid dehydrogenase 2 (dadA2) from Pseudomonas aeruginosa (strain ATCC 15692 / DSM 22644 / CIP 104116 / JCM 14847 / LMG 12228 / 1C / PRS 101 / PAO1).